An 89-amino-acid chain; its full sequence is Small ribosomal subunit protein uS17A (89 aa).

This sequence belongs to the universal ribosomal protein uS17 family. As to quaternary structure, part of the 30S ribosomal subunit.

One of the primary rRNA binding proteins, it binds specifically to the 5'-end of 16S ribosomal RNA. This chain is Small ribosomal subunit protein uS17A, found in Bacteroides thetaiotaomicron (strain ATCC 29148 / DSM 2079 / JCM 5827 / CCUG 10774 / NCTC 10582 / VPI-5482 / E50).